Here is a 559-residue protein sequence, read N- to C-terminus: ADP,ATP carrier protein 1 (559 aa).

A compositionally biased stretch (polar residues) spans 1–10; sequence MNEVENNNHS. The segment at 1 to 22 is disordered; the sequence is MNEVENNNHSFPREDIPTEDEI. N-linked (GlcNAc...) asparagine glycosylation is present at Asn-8. 4 helical membrane-spanning segments follow: residues 46–66, 79–99, 111–131, and 174–194; these read FALLGLMFGIIGFIYSFMRIL, TILFIKIFYILPVSMALVFLI, IFSIFCGGFASLFFLCGAVFL, and IVFISAEMWGSLVLSYLFLSF. An N-linked (GlcNAc...) asparagine glycan is attached at Asn-196. Helical transmembrane passes span 210-230 and 242-262; these read PLIIITNVSLFLSATVAGAFF and QVLLSGIFIFQGFLVVLVIFL. Asn-290 is a glycosylation site (N-linked (GlcNAc...) asparagine). 3 helical membrane passes run 305–325, 354–373, and 377–397; these read LLLAMSLIVLFFNISYNMVES, QYMTSVVVICLNLSPFSSYV, and GFLLVGLITPIVTLMAIVLFL. Asn-403 carries an N-linked (GlcNAc...) asparagine glycan. The next 3 membrane-spanning stretches (helical) occupy residues 425–447, 473–493, and 503–523; these read YVLENYFGVIFMSLLKITKYSAF, IFGKLGKSIGSIYGLLMFEAL, and PITAGIIFIFIVMWVKAIIYL.

This sequence belongs to the ADP/ATP translocase tlc family.

Its subcellular location is the cell membrane. ATP transporter involved in the uptake of ATP from the host cell cytoplasm. Provides the microsporidian cell with host ATP in exchange for ADP. This is an obligate exchange system. This energy acquiring activity is an important component of microsporidian parasitism. This chain is ADP,ATP carrier protein 1 (NTT1), found in Encephalitozoon cuniculi (strain GB-M1) (Microsporidian parasite).